We begin with the raw amino-acid sequence, 101 residues long: Ascorbate-specific PTS system EIIB component (101 aa).

One can recognise a PTS EIIB type-2 domain in the interval 3-96; the sequence is VRILAVCGNG…KLLKVIKEHF (94 aa). Cys9 functions as the Phosphocysteine intermediate in the catalytic mechanism. Cys9 carries the phosphocysteine modification.

It is found in the cytoplasm. The catalysed reaction is N(pros)-phospho-L-histidyl-[protein] + L-ascorbate(out) = L-ascorbate 6-phosphate(in) + L-histidyl-[protein]. Functionally, the phosphoenolpyruvate-dependent sugar phosphotransferase system (sugar PTS), a major carbohydrate active transport system, catalyzes the phosphorylation of incoming sugar substrates concomitantly with their translocation across the cell membrane. The enzyme II UlaABC PTS system is involved in ascorbate transport. The chain is Ascorbate-specific PTS system EIIB component (ulaB) from Shigella dysenteriae serotype 1 (strain Sd197).